Reading from the N-terminus, the 810-residue chain is Lon protease (810 aa).

Residues 8–201 form the Lon N-terminal domain; the sequence is LPLLPLRGIL…KLCGIVAKEL (194 aa). 353–360 contributes to the ATP binding site; that stretch reads GPPGVGKT. The 182-residue stretch at 589 to 770 folds into the Lon proteolytic domain; sequence NDEVGTVTGM…DQVLAIALLE (182 aa). Active-site residues include S676 and K719.

It belongs to the peptidase S16 family. Homohexamer. Organized in a ring with a central cavity.

The protein resides in the cytoplasm. It catalyses the reaction Hydrolysis of proteins in presence of ATP.. ATP-dependent serine protease that mediates the selective degradation of mutant and abnormal proteins as well as certain short-lived regulatory proteins. Required for cellular homeostasis and for survival from DNA damage and developmental changes induced by stress. Degrades polypeptides processively to yield small peptide fragments that are 5 to 10 amino acids long. Binds to DNA in a double-stranded, site-specific manner. This Desulforamulus reducens (strain ATCC BAA-1160 / DSM 100696 / MI-1) (Desulfotomaculum reducens) protein is Lon protease.